The following is a 209-amino-acid chain: Ribosomal RNA large subunit methyltransferase E (209 aa).

5 residues coordinate S-adenosyl-L-methionine: Gly63, Trp65, Asp83, Asp99, and Asp124. The Proton acceptor role is filled by Lys164.

The protein belongs to the class I-like SAM-binding methyltransferase superfamily. RNA methyltransferase RlmE family.

It is found in the cytoplasm. The catalysed reaction is uridine(2552) in 23S rRNA + S-adenosyl-L-methionine = 2'-O-methyluridine(2552) in 23S rRNA + S-adenosyl-L-homocysteine + H(+). Its function is as follows. Specifically methylates the uridine in position 2552 of 23S rRNA at the 2'-O position of the ribose in the fully assembled 50S ribosomal subunit. This chain is Ribosomal RNA large subunit methyltransferase E, found in Aliivibrio fischeri (strain ATCC 700601 / ES114) (Vibrio fischeri).